Here is a 110-residue protein sequence, read N- to C-terminus: UPF0213 protein DP2720 (110 aa).

Residues 12–88 form the GIY-YIG domain; it reads PAWFVYIVQC…KQLSPTRKRT (77 aa).

It belongs to the UPF0213 family.

The chain is UPF0213 protein DP2720 from Desulfotalea psychrophila (strain LSv54 / DSM 12343).